A 192-amino-acid polypeptide reads, in one-letter code: Elongation factor P (192 aa).

It belongs to the elongation factor P family.

It is found in the cytoplasm. The protein operates within protein biosynthesis; polypeptide chain elongation. Its function is as follows. Involved in peptide bond synthesis. Stimulates efficient translation and peptide-bond synthesis on native or reconstituted 70S ribosomes in vitro. Probably functions indirectly by altering the affinity of the ribosome for aminoacyl-tRNA, thus increasing their reactivity as acceptors for peptidyl transferase. In Borrelia recurrentis (strain A1), this protein is Elongation factor P.